Consider the following 466-residue polypeptide: Asparagine--tRNA ligase (466 aa).

This sequence belongs to the class-II aminoacyl-tRNA synthetase family. Homodimer.

It is found in the cytoplasm. It catalyses the reaction tRNA(Asn) + L-asparagine + ATP = L-asparaginyl-tRNA(Asn) + AMP + diphosphate + H(+). This chain is Asparagine--tRNA ligase, found in Buchnera aphidicola subsp. Schizaphis graminum (strain Sg).